The following is a 218-amino-acid chain: Octanoyltransferase (218 aa).

The region spanning 30–213 (GEIEDTLILV…YFSEVFNYDI (184 aa)) is the BPL/LPL catalytic domain. Substrate-binding positions include 75–82 (RGGDVTYH), 143–145 (AIG), and 156–158 (GFA). C174 serves as the catalytic Acyl-thioester intermediate.

This sequence belongs to the LipB family.

It is found in the cytoplasm. The catalysed reaction is octanoyl-[ACP] + L-lysyl-[protein] = N(6)-octanoyl-L-lysyl-[protein] + holo-[ACP] + H(+). It functions in the pathway protein modification; protein lipoylation via endogenous pathway; protein N(6)-(lipoyl)lysine from octanoyl-[acyl-carrier-protein]: step 1/2. In terms of biological role, catalyzes the transfer of endogenously produced octanoic acid from octanoyl-acyl-carrier-protein onto the lipoyl domains of lipoate-dependent enzymes. Lipoyl-ACP can also act as a substrate although octanoyl-ACP is likely to be the physiological substrate. This Alkaliphilus metalliredigens (strain QYMF) protein is Octanoyltransferase.